The primary structure comprises 144 residues: Large ribosomal subunit protein uL15 (144 aa).

The tract at residues 1 to 48 (MIKLEYLQDPSPRKRRTKLLGRGPSSGHGKTSGRGHKGDGSRSGYKRR) is disordered.

This sequence belongs to the universal ribosomal protein uL15 family. Part of the 50S ribosomal subunit.

Functionally, binds to the 23S rRNA. The polypeptide is Large ribosomal subunit protein uL15 (Chlamydia muridarum (strain MoPn / Nigg)).